Consider the following 291-residue polypeptide: MEMO1 family protein TK1477 (291 aa).

The protein belongs to the MEMO1 family.

The sequence is that of MEMO1 family protein TK1477 from Thermococcus kodakarensis (strain ATCC BAA-918 / JCM 12380 / KOD1) (Pyrococcus kodakaraensis (strain KOD1)).